A 126-amino-acid chain; its full sequence is Aspartate 1-decarboxylase (126 aa).

The Schiff-base intermediate with substrate; via pyruvic acid role is filled by S25. S25 carries the post-translational modification Pyruvic acid (Ser). T57 lines the substrate pocket. Catalysis depends on Y58, which acts as the Proton donor. 73–75 (GAA) is a binding site for substrate.

Belongs to the PanD family. In terms of assembly, heterooctamer of four alpha and four beta subunits. Pyruvate is required as a cofactor. Is synthesized initially as an inactive proenzyme, which is activated by self-cleavage at a specific serine bond to produce a beta-subunit with a hydroxyl group at its C-terminus and an alpha-subunit with a pyruvoyl group at its N-terminus.

The protein localises to the cytoplasm. The enzyme catalyses L-aspartate + H(+) = beta-alanine + CO2. It participates in cofactor biosynthesis; (R)-pantothenate biosynthesis; beta-alanine from L-aspartate: step 1/1. Catalyzes the pyruvoyl-dependent decarboxylation of aspartate to produce beta-alanine. The sequence is that of Aspartate 1-decarboxylase from Salmonella choleraesuis (strain SC-B67).